A 175-amino-acid polypeptide reads, in one-letter code: Crossover junction endodeoxyribonuclease RuvC (175 aa).

Active-site residues include D7, E68, and D141. Residues D7, E68, and D141 each coordinate Mg(2+).

The protein belongs to the RuvC family. Homodimer which binds Holliday junction (HJ) DNA. The HJ becomes 2-fold symmetrical on binding to RuvC with unstacked arms; it has a different conformation from HJ DNA in complex with RuvA. In the full resolvosome a probable DNA-RuvA(4)-RuvB(12)-RuvC(2) complex forms which resolves the HJ. It depends on Mg(2+) as a cofactor.

It localises to the cytoplasm. The catalysed reaction is Endonucleolytic cleavage at a junction such as a reciprocal single-stranded crossover between two homologous DNA duplexes (Holliday junction).. The RuvA-RuvB-RuvC complex processes Holliday junction (HJ) DNA during genetic recombination and DNA repair. Endonuclease that resolves HJ intermediates. Cleaves cruciform DNA by making single-stranded nicks across the HJ at symmetrical positions within the homologous arms, yielding a 5'-phosphate and a 3'-hydroxyl group; requires a central core of homology in the junction. The consensus cleavage sequence is 5'-(A/T)TT(C/G)-3'. Cleavage occurs on the 3'-side of the TT dinucleotide at the point of strand exchange. HJ branch migration catalyzed by RuvA-RuvB allows RuvC to scan DNA until it finds its consensus sequence, where it cleaves and resolves the cruciform DNA. The polypeptide is Crossover junction endodeoxyribonuclease RuvC (Salinispora arenicola (strain CNS-205)).